The sequence spans 616 residues: Membrane protein insertase YidC (616 aa).

A helical membrane pass occupies residues 9–29; that stretch reads ILAVILSGLVLIAWQYFYNVP. The segment at 37 to 80 is disordered; sequence QQQAQAELQKTTPQPTASATPGATPQSGGAAQPSTPAAGQQAQP. Over residues 44 to 71 the composition is skewed to polar residues; the sequence is LQKTTPQPTASATPGATPQSGGAAQPST. A run of 4 helical transmembrane segments spans residues 388 to 408, 462 to 482, 520 to 540, and 559 to 579; these read FFGNFGISILLVTVIVKLLFF, LPVVIQIPVFFSLYKVLFVTI, VFGHYLALGIWPIIMGITMWF, and WMPLIFTFMLAGFPAGLVIYW.

It belongs to the OXA1/ALB3/YidC family. Type 1 subfamily. As to quaternary structure, interacts with the Sec translocase complex via SecD. Specifically interacts with transmembrane segments of nascent integral membrane proteins during membrane integration.

Its subcellular location is the cell inner membrane. In terms of biological role, required for the insertion and/or proper folding and/or complex formation of integral membrane proteins into the membrane. Involved in integration of membrane proteins that insert both dependently and independently of the Sec translocase complex, as well as at least some lipoproteins. Aids folding of multispanning membrane proteins. The sequence is that of Membrane protein insertase YidC from Bradyrhizobium diazoefficiens (strain JCM 10833 / BCRC 13528 / IAM 13628 / NBRC 14792 / USDA 110).